Consider the following 103-residue polypeptide: Large ribosomal subunit protein bL21 (103 aa).

This sequence belongs to the bacterial ribosomal protein bL21 family. In terms of assembly, part of the 50S ribosomal subunit. Contacts protein L20.

This protein binds to 23S rRNA in the presence of protein L20. The sequence is that of Large ribosomal subunit protein bL21 from Escherichia coli O127:H6 (strain E2348/69 / EPEC).